The primary structure comprises 1226 residues: DNA-directed RNA polymerase subunit beta (1226 aa).

It belongs to the RNA polymerase beta chain family. As to quaternary structure, the RNAP catalytic core consists of 2 alpha, 1 beta, 1 beta' and 1 omega subunit. When a sigma factor is associated with the core the holoenzyme is formed, which can initiate transcription.

The catalysed reaction is RNA(n) + a ribonucleoside 5'-triphosphate = RNA(n+1) + diphosphate. Functionally, DNA-dependent RNA polymerase catalyzes the transcription of DNA into RNA using the four ribonucleoside triphosphates as substrates. In Leptospira interrogans serogroup Icterohaemorrhagiae serovar Lai (strain 56601), this protein is DNA-directed RNA polymerase subunit beta.